The following is a 203-amino-acid chain: Peptidyl-tRNA hydrolase (203 aa).

Tyr-14 contacts tRNA. His-19 (proton acceptor) is an active-site residue. Tyr-64, Asn-66, and Asn-112 together coordinate tRNA.

The protein belongs to the PTH family. As to quaternary structure, monomer.

Its subcellular location is the cytoplasm. It catalyses the reaction an N-acyl-L-alpha-aminoacyl-tRNA + H2O = an N-acyl-L-amino acid + a tRNA + H(+). Its function is as follows. Hydrolyzes ribosome-free peptidyl-tRNAs (with 1 or more amino acids incorporated), which drop off the ribosome during protein synthesis, or as a result of ribosome stalling. Catalyzes the release of premature peptidyl moieties from peptidyl-tRNA molecules trapped in stalled 50S ribosomal subunits, and thus maintains levels of free tRNAs and 50S ribosomes. This chain is Peptidyl-tRNA hydrolase, found in Methylobacterium sp. (strain 4-46).